Here is a 269-residue protein sequence, read N- to C-terminus: MLKINRKYAIILAIVAFSSFQTEAKAASISMLGTASNFGVLGGSTVTNTGPSVITESLGVSTGSSATGFPPAIVNGTIFTSDTVAAQAQVDNATAYNKLASLIPNKDLTGLDLGGLTLTPGVYSFSSSAQLTGILTLDNLGDPNALFVFQIGSTLTTASNSSIVTTNGDAPNVFFQIGSSATLGTGTQFMGNILALTSITLTTGVNIDCGRALAQNGAVTMDTNKVSNACYTKPQEKAVVPEPDSSLAVLGSGLVSLLFAFRKRFRKGW.

The N-terminal stretch at 1–24 (MLKINRKYAIILAIVAFSSFQTEA) is a signal peptide. Short sequence motifs (probable ice-binding motif (T/S-X-T)) lie at residues 45-47 (TVT), 65-67 (SAT), 128-130 (SAQ), 154-156 (TLT), 180-182 (SAT), 198-200 (SIT), and 218-220 (AVT). The tract at residues 240-263 (VPEPDSSLAVLGSGLVSLLFAFRK) is PEP C-terminal anchor. Residues 245–261 (SSLAVLGSGLVSLLFAF) traverse the membrane as a helical segment.

It belongs to the ice-binding protein family.

The protein localises to the cell outer membrane. Its function is as follows. A probable ice-binding protein that has ice-structuring activities in vitro. Thought not to anchor the cyanobacterium to ice surfaces, as its habitat is shallow puddles fed by glacier meltwater. The chain is Ice-binding protein from Nostoc sp. (strain HG1).